Reading from the N-terminus, the 107-residue chain is uncharacterized protein (107 aa).

This is an uncharacterized protein from Bacillus subtilis (strain 168).